The sequence spans 404 residues: DNA gyrase subunit B (404 aa).

One can recognise a Toprim domain in the interval 321-404 (SEIYIVEGDS…VIIMTDADVD (84 aa)). The Mg(2+) site is built by Glu327, Asp400, and Asp402.

Belongs to the type II topoisomerase GyrB family. Heterotetramer, composed of two GyrA and two GyrB chains. In the heterotetramer, GyrA contains the active site tyrosine that forms a transient covalent intermediate with DNA, while GyrB binds cofactors and catalyzes ATP hydrolysis. The cofactor is Mg(2+). Requires Mn(2+) as cofactor. It depends on Ca(2+) as a cofactor.

Its subcellular location is the cytoplasm. The catalysed reaction is ATP-dependent breakage, passage and rejoining of double-stranded DNA.. Its function is as follows. A type II topoisomerase that negatively supercoils closed circular double-stranded (ds) DNA in an ATP-dependent manner to modulate DNA topology and maintain chromosomes in an underwound state. Negative supercoiling favors strand separation, and DNA replication, transcription, recombination and repair, all of which involve strand separation. Also able to catalyze the interconversion of other topological isomers of dsDNA rings, including catenanes and knotted rings. Type II topoisomerases break and join 2 DNA strands simultaneously in an ATP-dependent manner. This Bacillus mycoides protein is DNA gyrase subunit B (gyrB).